The following is a 371-amino-acid chain: Collectin-46 (371 aa).

A signal peptide spans 1–20; that stretch reads MLLLPLSVLLLLTQPWRSLG. The tract at residues 43–215 is disordered; that stretch reads PEGGLPGRDG…ERGAKGESGL (173 aa). One can recognise a Collagen-like domain in the interval 46 to 216; it reads GLPGRDGQDG…RGAKGESGLA (171 aa). Positions 51–65 are enriched in basic and acidic residues; sequence DGQDGREGPQGEKGD. The N-linked (GlcNAc...) asparagine glycan is linked to Asn90. A compositionally biased stretch (low complexity) spans 113 to 128; the sequence is PAGREGPSGKQGSMGP. The segment covering 139–148 has biased composition (gly residues); sequence GPKGGMGAPG. Over residues 170-191 the composition is skewed to low complexity; that stretch reads APGSAGVAGPAGAIGPQGPSGA. Residues 198–210 are compositionally biased toward basic and acidic residues; that stretch reads KGDRGDPGERGAK. Positions 201–203 match the Cell attachment site motif; that stretch reads RGD. In terms of domain architecture, C-type lectin spans 273–371; the sequence is QLCREAKGQL…SEPLLVICEF (99 aa). 2 cysteine pairs are disulfide-bonded: Cys275–Cys369 and Cys347–Cys361.

It belongs to the SFTPD family. Oligomeric complex of 4 set of homotrimers. In terms of processing, hydroxylated. Highly expressed in thymus and liver.

The protein localises to the secreted. The chain is Collectin-46 (CL46) from Bos taurus (Bovine).